A 239-amino-acid polypeptide reads, in one-letter code: tRNA (guanine-N(7)-)-methyltransferase (239 aa).

Glu-69, Glu-94, Asp-121, and Asp-144 together coordinate S-adenosyl-L-methionine. Asp-144 is a catalytic residue. Residues Lys-148, Asp-180, and 217-220 (TKFE) contribute to the substrate site.

This sequence belongs to the class I-like SAM-binding methyltransferase superfamily. TrmB family.

It carries out the reaction guanosine(46) in tRNA + S-adenosyl-L-methionine = N(7)-methylguanosine(46) in tRNA + S-adenosyl-L-homocysteine. The protein operates within tRNA modification; N(7)-methylguanine-tRNA biosynthesis. Its function is as follows. Catalyzes the formation of N(7)-methylguanine at position 46 (m7G46) in tRNA. This chain is tRNA (guanine-N(7)-)-methyltransferase, found in Alcanivorax borkumensis (strain ATCC 700651 / DSM 11573 / NCIMB 13689 / SK2).